The sequence spans 79 residues: UPF0349 protein BCE33L4669 (79 aa).

It belongs to the UPF0349 family.

This chain is UPF0349 protein BCE33L4669, found in Bacillus cereus (strain ZK / E33L).